Reading from the N-terminus, the 130-residue chain is Con-Ins G2 (130 aa).

The signal sequence occupies residues 1–24 (MTTSSYFLLVALGLLLYVRQSFST). Disulfide bonds link C29-C100, C41-C103, C53-C116, and C102-C107. The residue at position 34 (P34) is a 4-hydroxyproline; partial. The segment at 54-74 (EEEEARRGGTNDGGKKRRRAS) is disordered. Residues 59-92 (RRGGTNDGGKKRRRASPLWKRRRFLSMLKARAKR) constitute a propeptide, c peptide. E111 bears the 4-carboxyglutamate; partial mark.

The protein belongs to the insulin family. Heterodimer of A and B chains; disulfide-linked. In terms of tissue distribution, expressed by the venom gland.

It is found in the secreted. Its function is as follows. This venom insulin, from a fish-hunting cone snail, facilitates prey capture by rapidly inducing hypoglycemic shock. Intraperitoneal injection of this peptide into zebrafish lowers blood glucose with the same potency than human insulin. In vivo, when applied to water, this peptide reduces overall locomotor activity of zebrafish larvae, observed as a significant decrease in the percentage of time spent swimming and movement frequency. The protein is Con-Ins G2 of Conus geographus (Geography cone).